The following is a 341-amino-acid chain: uncharacterized protein (341 aa).

Residues 125-146 (DTVKHNGSGPRPEQASSHVHYS) form a disordered region.

This sequence belongs to the cycloisomerase 2 family.

This is an uncharacterized protein from Lactococcus lactis subsp. cremoris (strain MG1363).